A 229-amino-acid polypeptide reads, in one-letter code: Nectarin-1 (229 aa).

An N-terminal signal peptide occupies residues 1–32 (MAAFGIKSKIFQIMEMTILFLFAISIDRYCFA). C42 and C57 form a disulfide bridge. The N-linked (GlcNAc...) asparagine glycan is linked to N60. The Cupin type-1 domain occupies 69 to 217 (FAISKPGATN…TFQINIEDVQ (149 aa)). 4 residues coordinate Mn(2+): H117, H119, E124, and H163.

The protein belongs to the germin family. In terms of assembly, monomer. In the absence of manganese, it forms tetrameric and pentameric forms which show superoxide dismutase activity. Mn(2+) serves as cofactor. Glycosylated.

The protein localises to the secreted. The protein resides in the extracellular space. It is found in the apoplast. The enzyme catalyses 2 superoxide + 2 H(+) = H2O2 + O2. Functionally, may interact with bacterial adhesins thereby protecting the reproductive tissues from microbial attack. Has no oxalate oxidase activity. This is Nectarin-1 (NEC1) from Nicotiana plumbaginifolia (Leadwort-leaved tobacco).